The sequence spans 292 residues: Phosphatidylserine decarboxylase proenzyme (292 aa).

Residues Asp-98, His-153, and Ser-254 each act as charge relay system; for autoendoproteolytic cleavage activity in the active site. Ser-254 acts as the Schiff-base intermediate with substrate; via pyruvic acid; for decarboxylase activity in catalysis. Residue Ser-254 is modified to Pyruvic acid (Ser); by autocatalysis.

The protein belongs to the phosphatidylserine decarboxylase family. PSD-B subfamily. Prokaryotic type I sub-subfamily. Heterodimer of a large membrane-associated beta subunit and a small pyruvoyl-containing alpha subunit. It depends on pyruvate as a cofactor. Is synthesized initially as an inactive proenzyme. Formation of the active enzyme involves a self-maturation process in which the active site pyruvoyl group is generated from an internal serine residue via an autocatalytic post-translational modification. Two non-identical subunits are generated from the proenzyme in this reaction, and the pyruvate is formed at the N-terminus of the alpha chain, which is derived from the carboxyl end of the proenzyme. The autoendoproteolytic cleavage occurs by a canonical serine protease mechanism, in which the side chain hydroxyl group of the serine supplies its oxygen atom to form the C-terminus of the beta chain, while the remainder of the serine residue undergoes an oxidative deamination to produce ammonia and the pyruvoyl prosthetic group on the alpha chain. During this reaction, the Ser that is part of the protease active site of the proenzyme becomes the pyruvoyl prosthetic group, which constitutes an essential element of the active site of the mature decarboxylase.

It localises to the cell membrane. The catalysed reaction is a 1,2-diacyl-sn-glycero-3-phospho-L-serine + H(+) = a 1,2-diacyl-sn-glycero-3-phosphoethanolamine + CO2. It functions in the pathway phospholipid metabolism; phosphatidylethanolamine biosynthesis; phosphatidylethanolamine from CDP-diacylglycerol: step 2/2. Its function is as follows. Catalyzes the formation of phosphatidylethanolamine (PtdEtn) from phosphatidylserine (PtdSer). This Halorhodospira halophila (strain DSM 244 / SL1) (Ectothiorhodospira halophila (strain DSM 244 / SL1)) protein is Phosphatidylserine decarboxylase proenzyme.